Reading from the N-terminus, the 221-residue chain is Veficolin-1 (221 aa).

Residues 1–25 (MTAWLDFPLALSPLVVVSMKGGSFG) form the signal peptide. One can recognise a Collagen-like domain in the interval 50–104 (QGQAGIPGIPGVPGTNGLPGAKGDLGPQGPPGERGSTGIPGKAGPKGDKGDQGEA). A disordered region spans residues 54–104 (GIPGIPGVPGTNGLPGAKGDLGPQGPPGERGSTGIPGKAGPKGDKGDQGEA). The Fibrinogen C-terminal domain occupies 111-221 (QQQEAGAKDC…DFNNSKTFAK (111 aa)). Cysteine 120 and cysteine 148 are joined by a disulfide.

Belongs to the ficolin lectin family. Veficolin subfamily. Expressed by the mandibular venom duct.

It is found in the secreted. Functionally, initiates complement activation and/or interferes in platelet aggregation and/or blood coagulation. In Varanus komodoensis (Komodo dragon), this protein is Veficolin-1.